Consider the following 555-residue polypeptide: Inositol 1,4,5-trisphosphate receptor-interacting protein-like 1 (555 aa).

The signal sequence occupies residues 1-24; it reads MNVDAEASMAVISLLFLAVMYVVH. Topologically, residues 25–103 are extracellular; it reads HPLMVSDRMD…WPFQADGQEG (79 aa). Positions 38-74 form a coiled coil; sequence LARSRQLEKRMSEEMRLLEMEFEERKRAAEQRQKAEN. Residues 104–124 form a helical membrane-spanning segment; sequence PLGWMLGNLWNTGLFCLFLVF. Residues 125–555 lie on the Cytoplasmic side of the membrane; it reads ELLRQNMQHE…LPHAPLAAAP (431 aa).

The protein belongs to the ITPRIP family. In terms of tissue distribution, expressed in testis and tumoral cells.

Its subcellular location is the cell membrane. Functions as a ligand of CD3E, inhibiting TCR-CD3 complex signaling to regulate T cell activation. Induces stable CD3E-NCK1 binding, thereby preventing the CD3E-ZAP70 interaction and subsequently inhibiting the activation of the downstream ERK-NFkB signaling cascade and calcium influx. This chain is Inositol 1,4,5-trisphosphate receptor-interacting protein-like 1, found in Homo sapiens (Human).